The chain runs to 537 residues: Chaperonin GroEL (537 aa).

ATP contacts are provided by residues Thr-29–Pro-32, Asp-86–Thr-90, Gly-413, and Asp-492.

Belongs to the chaperonin (HSP60) family. Forms a cylinder of 14 subunits composed of two heptameric rings stacked back-to-back. Interacts with the co-chaperonin GroES.

The protein resides in the cytoplasm. It catalyses the reaction ATP + H2O + a folded polypeptide = ADP + phosphate + an unfolded polypeptide.. In terms of biological role, together with its co-chaperonin GroES, plays an essential role in assisting protein folding. The GroEL-GroES system forms a nano-cage that allows encapsulation of the non-native substrate proteins and provides a physical environment optimized to promote and accelerate protein folding. The polypeptide is Chaperonin GroEL (Dehalococcoides mccartyi (strain ATCC BAA-2266 / KCTC 15142 / 195) (Dehalococcoides ethenogenes (strain 195))).